The sequence spans 138 residues: ATP synthase epsilon chain (138 aa).

The protein belongs to the ATPase epsilon chain family. As to quaternary structure, F-type ATPases have 2 components, CF(1) - the catalytic core - and CF(0) - the membrane proton channel. CF(1) has five subunits: alpha(3), beta(3), gamma(1), delta(1), epsilon(1). CF(0) has three main subunits: a, b and c.

It localises to the cell inner membrane. Produces ATP from ADP in the presence of a proton gradient across the membrane. The sequence is that of ATP synthase epsilon chain from Geobacter sulfurreducens (strain ATCC 51573 / DSM 12127 / PCA).